The chain runs to 303 residues: Oxygen-dependent coproporphyrinogen-III oxidase (303 aa).

Serine 93 provides a ligand contact to substrate. The a divalent metal cation site is built by histidine 97 and histidine 107. Histidine 107 functions as the Proton donor in the catalytic mechanism. Substrate is bound at residue 109 to 111 (NVR). Positions 149 and 179 each coordinate a divalent metal cation. The tract at residues 244-279 (YVEFNLVFDRGTLFGLQSGGRTESILLSMPPLAQWR) is important for dimerization. Residue 262 to 264 (GGR) participates in substrate binding.

The protein belongs to the aerobic coproporphyrinogen-III oxidase family. Homodimer. A divalent metal cation is required as a cofactor.

The protein localises to the cytoplasm. It catalyses the reaction coproporphyrinogen III + O2 + 2 H(+) = protoporphyrinogen IX + 2 CO2 + 2 H2O. It participates in porphyrin-containing compound metabolism; protoporphyrin-IX biosynthesis; protoporphyrinogen-IX from coproporphyrinogen-III (O2 route): step 1/1. Involved in the heme biosynthesis. Catalyzes the aerobic oxidative decarboxylation of propionate groups of rings A and B of coproporphyrinogen-III to yield the vinyl groups in protoporphyrinogen-IX. This Bordetella pertussis (strain Tohama I / ATCC BAA-589 / NCTC 13251) protein is Oxygen-dependent coproporphyrinogen-III oxidase.